A 799-amino-acid polypeptide reads, in one-letter code: Protein scabrous (799 aa).

A signal peptide spans 1–51 (MRDWQTFPDLQKKKVSRDHLNCPATMAGSNVLWPILLAVVLLQISVAFVSG). The interval 287–316 (TRKDGSSASVEEESGSQEANQEQTGLETTA) is disordered. N372 is a glycosylation site (N-linked (GlcNAc...) asparagine). The segment covering 489 to 498 (LNKPHKRPHH) has biased composition (basic residues). Positions 489-509 (LNKPHKRPHHQNVQAQMPQDD) are disordered. A Fibrinogen C-terminal domain is found at 533–737 (AIINKLPHDC…SSRMLVKRLP (205 aa)). The cysteines at positions 542 and 568 are disulfide-linked. N-linked (GlcNAc...) asparagine glycosylation is found at N587, N618, and N660. Cysteines 687 and 700 form a disulfide. 2 N-linked (GlcNAc...) asparagine glycosylation sites follow: N744 and N787.

In terms of processing, possesses five pairs of dibasic residues that may be the target of proteolytic processing.

The protein resides in the late endosome. Involved in regulation of neurogenesis. May encode a lateral inhibitor of R8 differentiation. In conjunction with Gp150, promotes Notch activation in response to Delta by regulating acquisition of insensitivity to Delta in a subset of cells. The chain is Protein scabrous (sca) from Drosophila melanogaster (Fruit fly).